The primary structure comprises 371 residues: Tetraacyldisaccharide 4'-kinase (371 aa).

48 to 55 is an ATP binding site; sequence SAGGTGKT.

It belongs to the LpxK family.

It catalyses the reaction a lipid A disaccharide + ATP = a lipid IVA + ADP + H(+). The protein operates within glycolipid biosynthesis; lipid IV(A) biosynthesis; lipid IV(A) from (3R)-3-hydroxytetradecanoyl-[acyl-carrier-protein] and UDP-N-acetyl-alpha-D-glucosamine: step 6/6. Its function is as follows. Transfers the gamma-phosphate of ATP to the 4'-position of a tetraacyldisaccharide 1-phosphate intermediate (termed DS-1-P) to form tetraacyldisaccharide 1,4'-bis-phosphate (lipid IVA). In Chlorobium chlorochromatii (strain CaD3), this protein is Tetraacyldisaccharide 4'-kinase.